The following is a 227-amino-acid chain: Cytochrome c oxidase subunit 2 (227 aa).

Residues 1 to 14 (MAHAAQVGLQDATS) are Mitochondrial intermembrane-facing. The chain crosses the membrane as a helical span at residues 15–45 (PIMEELIIFHDHALMIIFLICFLVLYALFLT). The Mitochondrial matrix portion of the chain corresponds to 46–59 (LTTKLTSTNISDAQ). Residues 60–87 (EMETVWTILPAIILVLIALPSLRILYMT) traverse the membrane as a helical segment. Topologically, residues 88–227 (DEINDPSFTI…IFEMGPVFTL (140 aa)) are mitochondrial intermembrane. Positions 161, 196, 198, 200, 204, and 207 each coordinate Cu cation. A Mg(2+)-binding site is contributed by E198.

Belongs to the cytochrome c oxidase subunit 2 family. Component of the cytochrome c oxidase (complex IV, CIV), a multisubunit enzyme composed of 14 subunits. The complex is composed of a catalytic core of 3 subunits MT-CO1, MT-CO2 and MT-CO3, encoded in the mitochondrial DNA, and 11 supernumerary subunits COX4I, COX5A, COX5B, COX6A, COX6B, COX6C, COX7A, COX7B, COX7C, COX8 and NDUFA4, which are encoded in the nuclear genome. The complex exists as a monomer or a dimer and forms supercomplexes (SCs) in the inner mitochondrial membrane with NADH-ubiquinone oxidoreductase (complex I, CI) and ubiquinol-cytochrome c oxidoreductase (cytochrome b-c1 complex, complex III, CIII), resulting in different assemblies (supercomplex SCI(1)III(2)IV(1) and megacomplex MCI(2)III(2)IV(2)). Found in a complex with TMEM177, COA6, COX18, COX20, SCO1 and SCO2. Interacts with TMEM177 in a COX20-dependent manner. Interacts with COX20. Interacts with COX16. The cofactor is Cu cation.

Its subcellular location is the mitochondrion inner membrane. The enzyme catalyses 4 Fe(II)-[cytochrome c] + O2 + 8 H(+)(in) = 4 Fe(III)-[cytochrome c] + 2 H2O + 4 H(+)(out). Functionally, component of the cytochrome c oxidase, the last enzyme in the mitochondrial electron transport chain which drives oxidative phosphorylation. The respiratory chain contains 3 multisubunit complexes succinate dehydrogenase (complex II, CII), ubiquinol-cytochrome c oxidoreductase (cytochrome b-c1 complex, complex III, CIII) and cytochrome c oxidase (complex IV, CIV), that cooperate to transfer electrons derived from NADH and succinate to molecular oxygen, creating an electrochemical gradient over the inner membrane that drives transmembrane transport and the ATP synthase. Cytochrome c oxidase is the component of the respiratory chain that catalyzes the reduction of oxygen to water. Electrons originating from reduced cytochrome c in the intermembrane space (IMS) are transferred via the dinuclear copper A center (CU(A)) of subunit 2 and heme A of subunit 1 to the active site in subunit 1, a binuclear center (BNC) formed by heme A3 and copper B (CU(B)). The BNC reduces molecular oxygen to 2 water molecules using 4 electrons from cytochrome c in the IMS and 4 protons from the mitochondrial matrix. The protein is Cytochrome c oxidase subunit 2 (MT-CO2) of Gorilla gorilla beringei (Mountain gorilla).